Here is a 367-residue protein sequence, read N- to C-terminus: Glutamate 5-kinase (367 aa).

Lys-10 is a binding site for ATP. Ser-50, Asp-137, and Asn-149 together coordinate substrate. ATP contacts are provided by residues 169–170 (TD) and 211–217 (TGGMSTK). The PUA domain occupies 275-353 (AGEITVDEGA…QQIDAILGYE (79 aa)).

This sequence belongs to the glutamate 5-kinase family.

The protein resides in the cytoplasm. It carries out the reaction L-glutamate + ATP = L-glutamyl 5-phosphate + ADP. It functions in the pathway amino-acid biosynthesis; L-proline biosynthesis; L-glutamate 5-semialdehyde from L-glutamate: step 1/2. Functionally, catalyzes the transfer of a phosphate group to glutamate to form L-glutamate 5-phosphate. This Salmonella paratyphi A (strain ATCC 9150 / SARB42) protein is Glutamate 5-kinase.